A 199-amino-acid polypeptide reads, in one-letter code: dTTP/UTP pyrophosphatase (199 aa).

The active-site Proton acceptor is D75.

Belongs to the Maf family. YhdE subfamily. It depends on a divalent metal cation as a cofactor.

It is found in the cytoplasm. The catalysed reaction is dTTP + H2O = dTMP + diphosphate + H(+). The enzyme catalyses UTP + H2O = UMP + diphosphate + H(+). Nucleoside triphosphate pyrophosphatase that hydrolyzes dTTP and UTP. May have a dual role in cell division arrest and in preventing the incorporation of modified nucleotides into cellular nucleic acids. The polypeptide is dTTP/UTP pyrophosphatase (Methylobacillus flagellatus (strain ATCC 51484 / DSM 6875 / VKM B-1610 / KT)).